The following is a 411-amino-acid chain: DNA polymerase IV (411 aa).

Residues 18–211 (VVHVDMDCFY…LDVADLHGVG (194 aa)) form the UmuC domain. Aspartate 22 and aspartate 130 together coordinate Mg(2+). Glutamate 131 is a catalytic residue. Disordered regions lie at residues 248-280 (FHRRARGADSRPVEPRGKPKSLSRESSFDGATE) and 376-411 (GFSGDETGDGGGHEGGACGGAGRGSCGGQTTLDEFT). A compositionally biased stretch (basic and acidic residues) spans 253–274 (RGADSRPVEPRGKPKSLSRESS). The span at 384–402 (DGGGHEGGACGGAGRGSCG) shows a compositional bias: gly residues.

Belongs to the DNA polymerase type-Y family. As to quaternary structure, monomer. Mg(2+) serves as cofactor.

Its subcellular location is the cytoplasm. The enzyme catalyses DNA(n) + a 2'-deoxyribonucleoside 5'-triphosphate = DNA(n+1) + diphosphate. Functionally, poorly processive, error-prone DNA polymerase involved in untargeted mutagenesis. Copies undamaged DNA at stalled replication forks, which arise in vivo from mismatched or misaligned primer ends. These misaligned primers can be extended by PolIV. Exhibits no 3'-5' exonuclease (proofreading) activity. May be involved in translesional synthesis. This chain is DNA polymerase IV, found in Halobacterium salinarum (strain ATCC 29341 / DSM 671 / R1).